Reading from the N-terminus, the 430-residue chain is tRNA(Ile)-lysidine synthase (430 aa).

Position 21 to 26 (21 to 26) interacts with ATP; the sequence is SGGLDS.

Belongs to the tRNA(Ile)-lysidine synthase family.

It is found in the cytoplasm. It catalyses the reaction cytidine(34) in tRNA(Ile2) + L-lysine + ATP = lysidine(34) in tRNA(Ile2) + AMP + diphosphate + H(+). Ligates lysine onto the cytidine present at position 34 of the AUA codon-specific tRNA(Ile) that contains the anticodon CAU, in an ATP-dependent manner. Cytidine is converted to lysidine, thus changing the amino acid specificity of the tRNA from methionine to isoleucine. The protein is tRNA(Ile)-lysidine synthase of Salmonella paratyphi B (strain ATCC BAA-1250 / SPB7).